A 410-amino-acid polypeptide reads, in one-letter code: Argininosuccinate synthase (410 aa).

Residue 10 to 18 coordinates ATP; sequence AYSGGLDTS. Residues tyrosine 88 and serine 93 each contribute to the L-citrulline site. Glycine 118 contacts ATP. 3 residues coordinate L-aspartate: threonine 120, asparagine 124, and aspartate 125. Asparagine 124 contacts L-citrulline. L-citrulline contacts are provided by arginine 128, serine 177, serine 186, glutamate 262, and tyrosine 274.

Belongs to the argininosuccinate synthase family. Type 1 subfamily. Homotetramer.

Its subcellular location is the cytoplasm. It catalyses the reaction L-citrulline + L-aspartate + ATP = 2-(N(omega)-L-arginino)succinate + AMP + diphosphate + H(+). Its pathway is amino-acid biosynthesis; L-arginine biosynthesis; L-arginine from L-ornithine and carbamoyl phosphate: step 2/3. The polypeptide is Argininosuccinate synthase (Thermoanaerobacter pseudethanolicus (strain ATCC 33223 / 39E) (Clostridium thermohydrosulfuricum)).